A 784-amino-acid polypeptide reads, in one-letter code: E3 UFM1-protein ligase 1 homolog (784 aa).

A disordered region spans residues 401 to 481; it reads QKGNSSAQDL…GGGGGGNKKT (81 aa).

The protein belongs to the UFL1 family.

E3 UFM1-protein ligase that mediates ufmylation of target proteins. This Drosophila ananassae (Fruit fly) protein is E3 UFM1-protein ligase 1 homolog.